Here is a 1900-residue protein sequence, read N- to C-terminus: Phosphatidylinositol 4-kinase STT4 (1900 aa).

Residue serine 459 is modified to Phosphoserine. Residues 1345-1530 (KIEGADSNEL…KPTLDRIRER (186 aa)) enclose the PIK helical domain. Residues 1531 to 1648 (MVSSFSQSHR…EKWQAAIFKV (118 aa)) are pleckstrin homology (PH) domain conferring phosphoinositide binding specificity. A PI3K/PI4K catalytic domain is found at 1617–1884 (FMATFKIKKD…LIRKSYESIF (268 aa)). The segment at 1623–1629 (IKKDVKD) is G-loop. Residues 1751 to 1759 (QFKDRHNGN) form a catalytic loop region. The segment at 1770–1794 (HIDFGFIFDIVPGGIKFEAVPFKLT) is activation loop.

It belongs to the PI3/PI4-kinase family. Type III PI4K subfamily.

It catalyses the reaction a 1,2-diacyl-sn-glycero-3-phospho-(1D-myo-inositol) + ATP = a 1,2-diacyl-sn-glycero-3-phospho-(1D-myo-inositol 4-phosphate) + ADP + H(+). In terms of biological role, acts on phosphatidylinositol (PI) in the first committed step in the production of the second messenger inositol 1,4,5,-trisphosphate. STT4 functions in PKC1 protein kinase pathway. This Saccharomyces cerevisiae (strain ATCC 204508 / S288c) (Baker's yeast) protein is Phosphatidylinositol 4-kinase STT4 (STT4).